A 206-amino-acid polypeptide reads, in one-letter code: Protein-methionine-sulfoxide reductase heme-binding subunit MsrQ (206 aa).

6 helical membrane-spanning segments follow: residues 10 to 30, 42 to 62, 75 to 95, 110 to 130, 147 to 167, and 169 to 189; these read VFIA…SAVL, LGLG…LQKL, LGLW…VFVL, PYII…VTSN, LVYV…RADL, and EWAI…PPVM.

This sequence belongs to the MsrQ family. In terms of assembly, heterodimer of a catalytic subunit (MsrP) and a heme-binding subunit (MsrQ). It depends on FMN as a cofactor. Heme b serves as cofactor.

The protein resides in the cell inner membrane. Its function is as follows. Part of the MsrPQ system that repairs oxidized periplasmic proteins containing methionine sulfoxide residues (Met-O), using respiratory chain electrons. Thus protects these proteins from oxidative-stress damage caused by reactive species of oxygen and chlorine generated by the host defense mechanisms. MsrPQ is essential for the maintenance of envelope integrity under bleach stress, rescuing a wide series of structurally unrelated periplasmic proteins from methionine oxidation. MsrQ provides electrons for reduction to the reductase catalytic subunit MsrP, using the quinone pool of the respiratory chain. The sequence is that of Protein-methionine-sulfoxide reductase heme-binding subunit MsrQ from Pseudomonas fluorescens (strain SBW25).